A 431-amino-acid chain; its full sequence is Isocitrate lyase (431 aa).

The disordered stretch occupies residues 1-21 (MSNVGTPRTAQEIQQDWDTNP). Residue 93–95 (SGW) participates in substrate binding. Mg(2+) is bound at residue Asp155. Cys193 (proton acceptor) is an active-site residue. Residues 194-195 (GH), Arg230, 315-319 (NCSPS), and Thr349 each bind substrate.

Belongs to the isocitrate lyase/PEP mutase superfamily. Isocitrate lyase family. In terms of assembly, homotetramer. It depends on Mg(2+) as a cofactor.

It carries out the reaction D-threo-isocitrate = glyoxylate + succinate. It functions in the pathway carbohydrate metabolism; glyoxylate cycle; (S)-malate from isocitrate: step 1/2. In terms of biological role, involved in the metabolic adaptation in response to environmental changes. Catalyzes the reversible formation of succinate and glyoxylate from isocitrate, a key step of the glyoxylate cycle, which operates as an anaplerotic route for replenishing the tricarboxylic acid cycle during growth on fatty acid substrates. This chain is Isocitrate lyase (aceA), found in Corynebacterium efficiens (strain DSM 44549 / YS-314 / AJ 12310 / JCM 11189 / NBRC 100395).